A 102-amino-acid chain; its full sequence is Large ribosomal subunit protein bL21 (102 aa).

Belongs to the bacterial ribosomal protein bL21 family. Part of the 50S ribosomal subunit. Contacts protein L20.

Functionally, this protein binds to 23S rRNA in the presence of protein L20. The protein is Large ribosomal subunit protein bL21 of Levilactobacillus brevis (strain ATCC 367 / BCRC 12310 / CIP 105137 / JCM 1170 / LMG 11437 / NCIMB 947 / NCTC 947) (Lactobacillus brevis).